Reading from the N-terminus, the 289-residue chain is 33 kDa chaperonin (289 aa).

2 disulfides stabilise this stretch: C235–C237 and C268–C271.

The protein belongs to the HSP33 family. Under oxidizing conditions two disulfide bonds are formed involving the reactive cysteines. Under reducing conditions zinc is bound to the reactive cysteines and the protein is inactive.

The protein localises to the cytoplasm. In terms of biological role, redox regulated molecular chaperone. Protects both thermally unfolding and oxidatively damaged proteins from irreversible aggregation. Plays an important role in the bacterial defense system toward oxidative stress. In Bacillus licheniformis (strain ATCC 14580 / DSM 13 / JCM 2505 / CCUG 7422 / NBRC 12200 / NCIMB 9375 / NCTC 10341 / NRRL NRS-1264 / Gibson 46), this protein is 33 kDa chaperonin.